Reading from the N-terminus, the 905-residue chain is MLNRSKKRNGCYFWVNGSSDEIRYVAVKASPKVNWKTHIIWRSLKNVKCIDSFHGNNEILGAGSSTGNISLLSVKHPEFQAVVTPGYARPCNSLAFSETEHLVAGFAKSRNESSLKLWDLNSLLSDPKSSPLMQSSTLDGVSSVCYKKDTPLLLTGSTSRSVHIIDTRQQLDSVSSVNTQYYSNIVVDPFSPNYFAANSYDGDIAIFDTRYFKSDNYLQIILRNENKKPKNPQLFALKYSEWKPGQLAVLSNNSITLRQLLPCVNGNEGSANNSVFVNYEKKYPVKPNSQCSGIDFFTPSTAFPTHVQILGVINEQPKLFSVHDEVIPFSFNPYNDLIFSFKEKLYPLNSSPFNTLSDVPQFDVSEFVDENSFDSSSSCSSKVFLTTRNNSINSEDSAHEVLLSYNRVLGSDIQGTILDRVKKGYQFDSQKNSELVSDLYLKDLWSWIHLSHRQSEESLFGDTGDTDFSYQGALGIWFMDTELTSMSDVFEAKESKFLEKKILRLARDVIERLDLDIFTSIQTKRPLRQLALLACGLGMSNDDLLLEIRRLIRKNEHVKAAGLALFHGKIENVVRILSSGNELEKTISTAVAGYITSQGLSNFGSDSLWKEMSRNLSTELEDPYLRAIFAYVSNSDWRDVLDEVSLSLKDRLGIALRFLPDDDLSNYLCDLCHTTVQSGDPEGLLLTGLTPLGMELLQNYIDHTSDVQTAALIAAFVVPKKFLDKRAEDWTESYRELLNRWKLYRERAKFDIFRTELSKNHTGEITRKATEPSIRIICNFCRKPIFPFSNRNECNNLPTPIQRGVSKAGPAKHLGKSCPHCGQPLPKCSVCGFSLGDEDVPQKDDFSQKPQNYVKEVNLQKSRFGLWFSFCLNCGHGAHASHASEWFSTHTICPVPNCDCECKLK.

4 WD repeats span residues 42 to 82 (RSLK…FQAV), 86 to 128 (GYAR…SDPK), 136 to 175 (STLDGVSSVCYKKDTPLLLTGSTSRSVHIIDTRQQLDSVS), and 177 to 217 (VNTQ…SDNY). Phosphoserine occurs at positions 394 and 397.

The protein belongs to the WD repeat mio family.

This is an uncharacterized protein from Schizosaccharomyces pombe (strain 972 / ATCC 24843) (Fission yeast).